The chain runs to 163 residues: NADPH-dependent 7-cyano-7-deazaguanine reductase (163 aa).

Cysteine 54 (thioimide intermediate) is an active-site residue. The Proton donor role is filled by aspartate 61. Substrate is bound by residues 76 to 78 (VES) and 95 to 96 (HE).

The protein belongs to the GTP cyclohydrolase I family. QueF type 1 subfamily.

The protein localises to the cytoplasm. The catalysed reaction is 7-aminomethyl-7-carbaguanine + 2 NADP(+) = 7-cyano-7-deazaguanine + 2 NADPH + 3 H(+). Its pathway is tRNA modification; tRNA-queuosine biosynthesis. Its function is as follows. Catalyzes the NADPH-dependent reduction of 7-cyano-7-deazaguanine (preQ0) to 7-aminomethyl-7-deazaguanine (preQ1). The polypeptide is NADPH-dependent 7-cyano-7-deazaguanine reductase (Streptococcus thermophilus (strain CNRZ 1066)).